The chain runs to 294 residues: Cytidine deaminase (294 aa).

2 CMP/dCMP-type deaminase domains span residues 48–168 and 186–294; these read DEDA…FGPK and LTGD…VLLA. 89 to 91 contributes to the substrate binding site; sequence NME. Histidine 102 contacts Zn(2+). The active-site Proton donor is glutamate 104. Residues cysteine 129 and cysteine 132 each contribute to the Zn(2+) site.

Belongs to the cytidine and deoxycytidylate deaminase family. In terms of assembly, homodimer. Requires Zn(2+) as cofactor.

The catalysed reaction is cytidine + H2O + H(+) = uridine + NH4(+). It carries out the reaction 2'-deoxycytidine + H2O + H(+) = 2'-deoxyuridine + NH4(+). Functionally, this enzyme scavenges exogenous and endogenous cytidine and 2'-deoxycytidine for UMP synthesis. In Escherichia coli O139:H28 (strain E24377A / ETEC), this protein is Cytidine deaminase.